Here is a 392-residue protein sequence, read N- to C-terminus: MSDELDSYRAKHYNSDDPIVRLLEEKIESLTKELEKLRQDLNWYKGELEKLLAPPYIEAIVLDILPDGKVIVRSSSGPNLIVNVSSNIDIKKLKPGSLVALTQRGSTIVEVLPEREDAYVKSFEVIEKPNVHYSDIGGLNEQINEIREVIELPLKNPELFKEIGIDPPKGVLLYGPPGTGKTLLAKAVATESNATFIQVVASEFAQKFVGEGARIVREVFELARRKAPSIVFIDEIDAIGAKRVDMGTSGEREIQRTLMQLLAEIDGFKPLDNVKIIAATNRLDILDPALLRPGRFDRLIEVPLPNFEGRKEIFRIYLQKMKTDGNIRYDILASMTEGFSGAEIKNVCTEAGYIAIRNGRKYVNMTDLITAIEKIKAKNNKAKNTDRTEKYV.

Residues isoleucine 19–alanine 53 are a coiled coil. Residues glycine 178–leucine 183 and tyrosine 317 each bind ATP. Residues lysine 390 to valine 392 form a docks into pockets in the proteasome alpha-ring to cause gate opening region.

The protein belongs to the AAA ATPase family. In terms of assembly, homohexamer. The hexameric complex has a two-ring architecture resembling a top hat that caps the 20S proteasome core at one or both ends. Upon ATP-binding, the C-terminus of PAN interacts with the alpha-rings of the proteasome core by binding to the intersubunit pockets.

It localises to the cytoplasm. Functionally, ATPase which is responsible for recognizing, binding, unfolding and translocation of substrate proteins into the archaeal 20S proteasome core particle. Is essential for opening the gate of the 20S proteasome via an interaction with its C-terminus, thereby allowing substrate entry and access to the site of proteolysis. Thus, the C-termini of the proteasomal ATPase function like a 'key in a lock' to induce gate opening and therefore regulate proteolysis. Unfolding activity requires energy from ATP hydrolysis, whereas ATP binding alone promotes ATPase-20S proteasome association which triggers gate opening, and supports translocation of unfolded substrates. The sequence is that of Proteasome-activating nucleotidase from Sulfurisphaera tokodaii (strain DSM 16993 / JCM 10545 / NBRC 100140 / 7) (Sulfolobus tokodaii).